A 204-amino-acid chain; its full sequence is Inositol diphosphatase DSP5 (204 aa).

Positions Asn-19–Leu-168 constitute a Tyrosine-protein phosphatase domain. The WPD loop important for active site topology stretch occupies residues Phe-75–Met-87. The Phosphocysteine intermediate role is filled by Cys-111.

This sequence belongs to the protein-tyrosine phosphatase family. Atypical dual-specificity phosphatase Siw14-like subfamily. As to expression, highly expressed in flowers. Expressed at low levels in roots, leaves, stems and siliques.

The enzyme catalyses 5-diphospho-1D-myo-inositol 1,2,3,4,6-pentakisphosphate + H2O = 1D-myo-inositol hexakisphosphate + phosphate + H(+). It catalyses the reaction 1,5-bis(diphospho)-1D-myo-inositol 2,3,4,6-tetrakisphosphate + H2O = 1-diphospho-1D-myo-inositol 2,3,4,5,6-pentakisphosphate + phosphate + 2 H(+). It carries out the reaction 3,5-bis(diphospho)-1D-myo-inositol 1,2,4,6-tetrakisphosphate + H2O = 3-diphospho-1D-myo-inositol 1,2,4,5,6-pentakisphosphate + phosphate + 2 H(+). The catalysed reaction is 6-diphospho-1D-myo-inositol pentakisphosphate + H2O = 1D-myo-inositol hexakisphosphate + phosphate + H(+). In terms of biological role, cleaves the beta-phosphate at the 5-position of soluble inositol pyrophosphates. Has highest activity on 5-diphosphoinositol 1,2,3,4,6-pentakisphosphate (5-InsP(7)). Possesses low phosphotyrosine phosphatase activity in vitro. Dephosphorylates the phosphoinositides PI(3,5)P2. Hydrolyzes O-methylfluorescein phosphate in vitro. This is Inositol diphosphatase DSP5 from Arabidopsis thaliana (Mouse-ear cress).